The following is a 234-amino-acid chain: Uridylate kinase (234 aa).

Gly10–Ser11 provides a ligand contact to ATP. Gly44 contributes to the UMP binding site. ATP-binding residues include Gly45 and Arg49. UMP contacts are provided by residues Asp66 and Ile114–Thr120. 3 residues coordinate ATP: Thr140, Tyr146, and Asp149.

The protein belongs to the UMP kinase family. As to quaternary structure, homohexamer.

The protein resides in the cytoplasm. The enzyme catalyses UMP + ATP = UDP + ADP. Its pathway is pyrimidine metabolism; CTP biosynthesis via de novo pathway; UDP from UMP (UMPK route): step 1/1. Its activity is regulated as follows. Inhibited by UTP. Catalyzes the reversible phosphorylation of UMP to UDP. The chain is Uridylate kinase from Methanoculleus marisnigri (strain ATCC 35101 / DSM 1498 / JR1).